We begin with the raw amino-acid sequence, 500 residues long: Beta-xylosidase (500 aa).

The active-site Proton donor is E160. The active-site Nucleophile is the E277.

It belongs to the glycosyl hydrolase 39 family.

It catalyses the reaction Hydrolysis of (1-&gt;4)-beta-D-xylans, to remove successive D-xylose residues from the non-reducing termini.. The protein is Beta-xylosidase (xynB) of Thermoanaerobacterium saccharolyticum (strain DSM 8691 / JW/SL-YS485).